The sequence spans 179 residues: Putative manganese efflux pump MntP (179 aa).

The next 6 membrane-spanning stretches (helical) occupy residues 4 to 24 (VLIL…GLGI), 39 to 59 (LFFG…GIGL), 69 to 89 (IVAF…AFNE), 102 to 122 (ILLT…YSLH), 128 to 148 (IYLS…IGVY), and 159 to 179 (SKAE…ILLF).

The protein belongs to the MntP (TC 9.B.29) family.

Its subcellular location is the cell inner membrane. Probably functions as a manganese efflux pump. In Aliarcobacter butzleri (strain RM4018) (Arcobacter butzleri), this protein is Putative manganese efflux pump MntP.